A 506-amino-acid polypeptide reads, in one-letter code: AMP phosphorylase (506 aa).

Residues glycine 168, serine 194–glycine 199, and threonine 203 contribute to the AMP site. The active-site Proton donor is the aspartate 256. 2 residues coordinate AMP: serine 264 and lysine 288.

This sequence belongs to the thymidine/pyrimidine-nucleoside phosphorylase family. Type 2 subfamily.

It catalyses the reaction AMP + phosphate = alpha-D-ribose 1,5-bisphosphate + adenine. The catalysed reaction is CMP + phosphate = cytosine + alpha-D-ribose 1,5-bisphosphate. The enzyme catalyses UMP + phosphate = alpha-D-ribose 1,5-bisphosphate + uracil. Functionally, catalyzes the conversion of AMP and phosphate to adenine and ribose 1,5-bisphosphate (R15P). Exhibits phosphorylase activity toward CMP and UMP in addition to AMP. Functions in an archaeal AMP degradation pathway, together with R15P isomerase and RubisCO. The chain is AMP phosphorylase from Methanococcoides burtonii (strain DSM 6242 / NBRC 107633 / OCM 468 / ACE-M).